Here is a 340-residue protein sequence, read N- to C-terminus: DNA-directed RNA polymerase subunit alpha (340 aa).

The interval 1–238 (MVDPIVTKNW…EQLSIFINFD (238 aa)) is alpha N-terminal domain (alpha-NTD). The segment at 255-340 (LNENLFRSVD…AAPQGGAPKV (86 aa)) is alpha C-terminal domain (alpha-CTD).

It belongs to the RNA polymerase alpha chain family. In terms of assembly, homodimer. The RNAP catalytic core consists of 2 alpha, 1 beta, 1 beta' and 1 omega subunit. When a sigma factor is associated with the core the holoenzyme is formed, which can initiate transcription.

The enzyme catalyses RNA(n) + a ribonucleoside 5'-triphosphate = RNA(n+1) + diphosphate. DNA-dependent RNA polymerase catalyzes the transcription of DNA into RNA using the four ribonucleoside triphosphates as substrates. The polypeptide is DNA-directed RNA polymerase subunit alpha (Anaeromyxobacter dehalogenans (strain 2CP-1 / ATCC BAA-258)).